A 126-amino-acid chain; its full sequence is Profilin (126 aa).

This sequence belongs to the profilin family. In terms of assembly, occurs in many kinds of cells as a complex with monomeric actin in a 1:1 ratio.

It is found in the cytoplasm. It localises to the cytoskeleton. In terms of biological role, binds to actin and affects the structure of the cytoskeleton. At high concentrations, profilin prevents the polymerization of actin, whereas it enhances it at low concentrations. By binding to PIP2, it inhibits the formation of IP3 and DG. In Branchiostoma belcheri (Amphioxus), this protein is Profilin.